A 177-amino-acid chain; its full sequence is ATP synthase subunit delta (177 aa).

The protein belongs to the ATPase delta chain family. As to quaternary structure, F-type ATPases have 2 components, F(1) - the catalytic core - and F(0) - the membrane proton channel. F(1) has five subunits: alpha(3), beta(3), gamma(1), delta(1), epsilon(1). F(0) has three main subunits: a(1), b(2) and c(10-14). The alpha and beta chains form an alternating ring which encloses part of the gamma chain. F(1) is attached to F(0) by a central stalk formed by the gamma and epsilon chains, while a peripheral stalk is formed by the delta and b chains.

The protein localises to the cell inner membrane. Its function is as follows. F(1)F(0) ATP synthase produces ATP from ADP in the presence of a proton or sodium gradient. F-type ATPases consist of two structural domains, F(1) containing the extramembraneous catalytic core and F(0) containing the membrane proton channel, linked together by a central stalk and a peripheral stalk. During catalysis, ATP synthesis in the catalytic domain of F(1) is coupled via a rotary mechanism of the central stalk subunits to proton translocation. In terms of biological role, this protein is part of the stalk that links CF(0) to CF(1). It either transmits conformational changes from CF(0) to CF(1) or is implicated in proton conduction. The polypeptide is ATP synthase subunit delta (Yersinia pseudotuberculosis serotype O:1b (strain IP 31758)).